A 518-amino-acid chain; its full sequence is Cytochrome P450 monooxygenase atnE (518 aa).

Residues Phe-11–Val-31 traverse the membrane as a helical segment. A glycan (N-linked (GlcNAc...) asparagine) is linked at Asn-184. Cys-458 is a heme binding site.

It belongs to the cytochrome P450 family. The cofactor is heme.

It localises to the membrane. It participates in secondary metabolite biosynthesis. In terms of biological role, cytochrome P450 monooxygenase; part of the gene cluster that mediates the biosynthesis of aspercryptins, linear lipopeptides built from six amino acids including 2 highly unusual and nonproteogenic amino acids, 2-amino-octanoic acid (2aoa) and 2-amino-dodecanol (2adol). The core structure of aspercryptins is as follows: Ser/Ala-Thr-Ile/Val-2aoa-Asn-2adol. The first step of aspercryptin biosynthesis is the generation of the fatty acid precursors, octanoic and dodecanoic acids, by the FAS subunits atnF and atnM. The fatty acid precursors are likely transformed into the corresponding alpha-amino fatty acids in three steps. First, they are hydroxylated by the cytochrome P450 monooxygenase atnE, then oxidized to the corresponding alpha-keto acids by the NAD(P)-dependent oxidoreductase atnD, and finally converted to the alpha-amino fatty acids by the PLP-dependent aminotransferases atnH or atnJ. the alpha-amino fatty acids, 2-amino-octanoic and 2-amino-dodecanoic acids, are recognized, activated, and covalently tethered to the NRPS atnA by its fourth and sixth adenylation domains. The second module of atnA is the Thr module and contains an epimerase (E) domain responsible for the epimerization of Thr to D-allo-Thr. Additionally, despite atnA having only one epimerase domain, the first amino acid of aspercryptin A1 is D-Ser, suggesting that serine is either loaded directly as D-Ser on the first module or that the epimerase domain in the threonine module epimerizes both L-Ser and L-Thr. After condensation of the hexapeptide of aspercryptin, the C-terminal reductase (TE) domain might be involved in the reductive release and production of the aldehyde hexapeptide. Further reduction would generate aspercryptins. The variety of aspercryptins produced reflects the flexibility of the atnA NRPS, allowing incorporation of alanine instead of serine, valine for isoleucine, and a C10 fatty amino alcohol instead of the C12 version. AtnB seems to be involved in the selectivity for Ile versus Val by the third module. Moreover, type B, C and D aspercryptins have an additional N-terminal cichorine, acetyl and propionyl group respectively. This is Cytochrome P450 monooxygenase atnE from Emericella nidulans (strain FGSC A4 / ATCC 38163 / CBS 112.46 / NRRL 194 / M139) (Aspergillus nidulans).